A 137-amino-acid chain; its full sequence is Small ribosomal subunit protein uS12 (137 aa).

Disordered stretches follow at residues 1–21 (MPTINQLVRKPRKSKIEKSDS) and 34–57 (VHTKIAAPQKRGVATRVGTMTPKK). Position 102 is a 3-methylthioaspartic acid (aspartate 102).

It belongs to the universal ribosomal protein uS12 family. Part of the 30S ribosomal subunit. Contacts proteins S8 and S17. May interact with IF1 in the 30S initiation complex.

With S4 and S5 plays an important role in translational accuracy. In terms of biological role, interacts with and stabilizes bases of the 16S rRNA that are involved in tRNA selection in the A site and with the mRNA backbone. Located at the interface of the 30S and 50S subunits, it traverses the body of the 30S subunit contacting proteins on the other side and probably holding the rRNA structure together. The combined cluster of proteins S8, S12 and S17 appears to hold together the shoulder and platform of the 30S subunit. The sequence is that of Small ribosomal subunit protein uS12 from Streptococcus uberis (strain ATCC BAA-854 / 0140J).